The chain runs to 222 residues: Histone H1.5 (222 aa).

Residues 1–16 are compositionally biased toward low complexity; the sequence is MSETAPAETTAPAPVE. A disordered region spans residues 1–55; that stretch reads MSETAPAETTAPAPVEKSPAKKKTKKAGAAKRKATGPPVSELITKAVSASKERGG. At Ser-2 the chain carries N-acetylserine. Ser-2 is subject to Phosphoserine. Lys-17 is subject to N6-acetyllysine. The residue at position 18 (Ser-18) is a Phosphoserine. Residues 20–34 are compositionally biased toward basic residues; the sequence is AKKKTKKAGAAKRKA. At Lys-26 the chain carries N6-methyllysine. Residue Lys-33 is modified to N6-(beta-hydroxybutyryl)lysine; alternate. Residue Lys-33 is modified to N6-succinyllysine; alternate. Thr-35 is subject to Phosphothreonine. An H15 domain is found at 35 to 108; it reads TGPPVSELIT…GASGSFKLNK (74 aa). Lys-45 carries the post-translational modification N6-acetyllysine. Lys-51 bears the N6-(beta-hydroxybutyryl)lysine mark. Residue Arg-53 is modified to Citrulline. Lys-63 carries the post-translational modification N6-(beta-hydroxybutyryl)lysine. Lys-74 carries the N6-acetyllysine modification. N6-(beta-hydroxybutyryl)lysine occurs at positions 84, 89, and 105. The disordered stretch occupies residues 94–222; it reads QTKGTGASGS…KVKKAVSKKK (129 aa). A compositionally biased stretch (basic residues) spans 118-129; it reads KAKKTGAAKAKK. Phosphothreonine occurs at positions 134 and 151. The segment covering 136–157 has biased composition (basic residues); that stretch reads KKPKKTAGAKKTVKKTPKKAKK. The residue at position 164 (Lys-164) is an N6-acetyllysine. Basic residues predominate over residues 165 to 183; it reads KVTKSPKKAKAAAKPKKAT. Residues Ser-169 and Ser-185 each carry the phosphoserine modification. Positions 190–222 are enriched in basic residues; that stretch reads KAVKSKASKPKVTKPKAAKPKAAKVKKAVSKKK.

This sequence belongs to the histone H1/H5 family. Interacts with MSX1. H1 histones are progressively phosphorylated during the cell cycle, becoming maximally phosphorylated during late G2 phase and M phase, and being dephosphorylated sharply thereafter. In terms of processing, citrullination at Arg-53 (H1R54ci) by PADI4 takes place within the DNA-binding site of H1 and results in its displacement from chromatin and global chromatin decondensation, thereby promoting pluripotency and stem cell maintenance.

The protein resides in the nucleus. It is found in the chromosome. Histone H1 protein binds to linker DNA between nucleosomes forming the macromolecular structure known as the chromatin fiber. Histones H1 are necessary for the condensation of nucleosome chains into higher-order structured fibers. Also acts as a regulator of individual gene transcription through chromatin remodeling, nucleosome spacing and DNA methylation. This chain is Histone H1.5 (H1-5), found in Rattus norvegicus (Rat).